A 254-amino-acid polypeptide reads, in one-letter code: Glycerol operon regulatory protein (254 aa).

Residues 5 to 67 form the HTH iclR-type domain; that stretch reads IQSLERAAAM…DASGRYQLGA (63 aa). Positions 27 to 46 form a DNA-binding region, H-T-H motif; it reads LSDIASSLGLAKGTAHGILR. Positions 82–251 constitute an IclR-ED domain; it reads LRARALVWTD…ARAVSRDLGA (170 aa).

May be an activator protein for the gylABX operon. In Streptomyces coelicolor (strain ATCC BAA-471 / A3(2) / M145), this protein is Glycerol operon regulatory protein (gylR).